The sequence spans 130 residues: Small ribosomal subunit protein uS8 (130 aa).

This sequence belongs to the universal ribosomal protein uS8 family. As to quaternary structure, part of the 30S ribosomal subunit.

Its function is as follows. One of the primary rRNA binding proteins, it binds directly to 16S rRNA central domain where it helps coordinate assembly of the platform of the 30S subunit. The polypeptide is Small ribosomal subunit protein uS8 (Pyrobaculum islandicum (strain DSM 4184 / JCM 9189 / GEO3)).